The chain runs to 398 residues: Acetate kinase (398 aa).

Mg(2+) is bound at residue asparagine 10. Lysine 17 contributes to the ATP binding site. Arginine 89 is a substrate binding site. Residue aspartate 148 is the Proton donor/acceptor of the active site. ATP is bound by residues 208 to 212 (HLGNG), 283 to 285 (DCR), and 331 to 335 (GIGEN). A Mg(2+)-binding site is contributed by glutamate 385.

Belongs to the acetokinase family. As to quaternary structure, homodimer. Mg(2+) serves as cofactor. It depends on Mn(2+) as a cofactor.

The protein resides in the cytoplasm. It carries out the reaction acetate + ATP = acetyl phosphate + ADP. Its pathway is metabolic intermediate biosynthesis; acetyl-CoA biosynthesis; acetyl-CoA from acetate: step 1/2. Catalyzes the formation of acetyl phosphate from acetate and ATP. Can also catalyze the reverse reaction. This is Acetate kinase from Histophilus somni (strain 129Pt) (Haemophilus somnus).